Reading from the N-terminus, the 234-residue chain is MAKKVFKRLEKLFSKIQNDKVYGVEQGVGAVKSLASAKFDETVEVALRLGVDPRHADQMVRGAVVLPHGTGKKVRVAVFAKDIKQDEAKNAGADVVGGDDLAEEIKNGRIDFDMVIATPDMMAVVGKVGRILGPKGLMPNPKTGTVTMDIAKAVTNAKSGQVNFKVDKKGNIHAPIGKVSFPEEKIKENMLELVKTINRLKPNSAKGKYIRNAALSLTMSPSVSLDAQELMDIK.

It belongs to the universal ribosomal protein uL1 family. In terms of assembly, part of the 50S ribosomal subunit.

Functionally, binds directly to 23S rRNA. The L1 stalk is quite mobile in the ribosome, and is involved in E site tRNA release. Its function is as follows. Protein L1 is also a translational repressor protein, it controls the translation of the L11 operon by binding to its mRNA. This chain is Large ribosomal subunit protein uL1, found in Helicobacter acinonychis (strain Sheeba).